The primary structure comprises 785 residues: MEQRVLKTLEYDKIVALLIDKASCTYGKEKASELIPFLRLDEVINAQQGTEQAATVLRLKGSVPLGGIRDIRGPVQRARLNAMLAPMELLDIASTVMAGRRLKTFLLDMCDDHELPLLQQQAERIEGLRELETEIRRCVDENGDILDSASLELRQVRQEIRQLESRIREKLDQMTRSSTYQKMLMENIVTIRGDRFVIPVKQEYRSVFGGIVHDQSASGATLFIEPEVIVEMNNKLRELRLREEREVERILYVLTEQVSFAVEALVENTEALTELDFMFAKAQLAWSMKAICPRINDRGYVNMRKARHPLIPREVVVPVDVELGGEYQAIVVTGPNTGGKTVSLKTIGLLSLMTMAGLHIPAEEESEMTVFSSIFADIGDEQSIEQSLSTFSSHMTNIIQILAKMDDKSLVLFDELGAGTDPTEGAALAMSIIDHVIDSGARLVATTHYSELKAYAYDRPEVINASVEFDVQTLRPTYRLLIGVPGRSNAFAIARRLGLPEHIIDVARGSISEEDNQVESMIASLERNRKSAEADRLAAKAARQEAEELRTQLEEERAQFAEEKNKRMERAEDEARIAVQLAKEEAETIIRELREMMAEGMEIKEHRLIDAKKRLGNAVLELEKEKVKKPAKAVRATQIKVGDEVMVTSFGQKGTVLEKVNNEEFLVQIGIMKMKVKRDDMHVQNSIQQKPQAAPYTSVKRRSDNIKMDLDLRGYNVEDSIREIDQFLDDALLAGLHSVSIIHGHGTGVLRKGVHEYLRSHRNVKSFRLGGQGEGGVGATIAELK.

334–341 (GPNTGGKT) provides a ligand contact to ATP. The 76-residue stretch at 710 to 785 (LDLRGYNVED…GVGATIAELK (76 aa)) folds into the Smr domain.

This sequence belongs to the DNA mismatch repair MutS family. MutS2 subfamily. As to quaternary structure, homodimer. Binds to stalled ribosomes, contacting rRNA.

Functionally, endonuclease that is involved in the suppression of homologous recombination and thus may have a key role in the control of bacterial genetic diversity. Acts as a ribosome collision sensor, splitting the ribosome into its 2 subunits. Detects stalled/collided 70S ribosomes which it binds and splits by an ATP-hydrolysis driven conformational change. Acts upstream of the ribosome quality control system (RQC), a ribosome-associated complex that mediates the extraction of incompletely synthesized nascent chains from stalled ribosomes and their subsequent degradation. Probably generates substrates for RQC. The polypeptide is Endonuclease MutS2 (Brevibacillus brevis (strain 47 / JCM 6285 / NBRC 100599)).